The sequence spans 132 residues: Small ribosomal subunit protein uS12 (132 aa).

A 3-methylthioaspartic acid modification is found at aspartate 89. Residues 103–132 (DTSGVADRRQSRSKYGAKQPKEGGAAKGKK) are disordered.

This sequence belongs to the universal ribosomal protein uS12 family. In terms of assembly, part of the 30S ribosomal subunit. Contacts proteins S8 and S17. May interact with IF1 in the 30S initiation complex.

In terms of biological role, with S4 and S5 plays an important role in translational accuracy. Functionally, interacts with and stabilizes bases of the 16S rRNA that are involved in tRNA selection in the A site and with the mRNA backbone. Located at the interface of the 30S and 50S subunits, it traverses the body of the 30S subunit contacting proteins on the other side and probably holding the rRNA structure together. The combined cluster of proteins S8, S12 and S17 appears to hold together the shoulder and platform of the 30S subunit. This is Small ribosomal subunit protein uS12 from Chlorobium phaeovibrioides (strain DSM 265 / 1930) (Prosthecochloris vibrioformis (strain DSM 265)).